The following is a 565-amino-acid chain: Probable transcription factor lepB (565 aa).

The fungal specific transcription factor domain stretch occupies residues 52 to 259 (KRYAEDVTYL…PRNLDDRDLD (208 aa)).

The protein resides in the nucleus. In terms of biological role, probable transcription factor; part of the gene cluster 23 that mediates the biosynthesis of a family of 2-pyridones known as leporins. The polypeptide is Probable transcription factor lepB (Aspergillus flavus (strain ATCC 200026 / FGSC A1120 / IAM 13836 / NRRL 3357 / JCM 12722 / SRRC 167)).